The sequence spans 502 residues: tRNA-specific adenosine deaminase 1 (502 aa).

An A to I editase domain is found at 63 to 501; the sequence is SMGTGTKCIG…IRNPPDYHQF (439 aa). Zn(2+) is bound at residue His-87. Glu-89 (proton donor) is an active-site residue. Positions 93 and 94 each coordinate 1D-myo-inositol hexakisphosphate. Zn(2+) is bound at residue Cys-142. Residues 174–194 are disordered; it reads SSNLEAPGNERKCEDPDSPVT. The residue at position 191 (Ser-191) is a Phosphoserine. Cys-299 lines the Zn(2+) pocket. Positions 302, 305, 435, and 470 each coordinate 1D-myo-inositol hexakisphosphate.

Belongs to the ADAT1 family. Requires 1D-myo-inositol hexakisphosphate as cofactor. Ubiquitously expressed.

The enzyme catalyses adenosine(37) in tRNA(Ala) + H2O + H(+) = inosine(37) in tRNA(Ala) + NH4(+). Specifically deaminates adenosine-37 to inosine in tRNA-Ala. The protein is tRNA-specific adenosine deaminase 1 (ADAT1) of Homo sapiens (Human).